Reading from the N-terminus, the 76-residue chain is ATP synthase subunit 9, mitochondrial (76 aa).

2 helical membrane-spanning segments follow: residues 14–34 (ISTI…AALI) and 52–72 (ILGF…SFLL).

Belongs to the ATPase C chain family. As to quaternary structure, F-type ATPases have 2 components, CF(1) - the catalytic core - and CF(0) - the membrane proton channel. CF(1) has five subunits: alpha(3), beta(3), gamma(1), delta(1), epsilon(1). CF(0) has three main subunits: a, b and c.

It localises to the mitochondrion membrane. Its function is as follows. Mitochondrial membrane ATP synthase (F(1)F(0) ATP synthase or Complex V) produces ATP from ADP in the presence of a proton gradient across the membrane which is generated by electron transport complexes of the respiratory chain. F-type ATPases consist of two structural domains, F(1) - containing the extramembraneous catalytic core and F(0) - containing the membrane proton channel, linked together by a central stalk and a peripheral stalk. During catalysis, ATP synthesis in the catalytic domain of F(1) is coupled via a rotary mechanism of the central stalk subunits to proton translocation. Part of the complex F(0) domain. A homomeric c-ring of probably 10 subunits is part of the complex rotary element. This chain is ATP synthase subunit 9, mitochondrial (ATP9), found in Vanderwaltozyma polyspora (strain ATCC 22028 / DSM 70294 / BCRC 21397 / CBS 2163 / NBRC 10782 / NRRL Y-8283 / UCD 57-17) (Kluyveromyces polysporus).